Reading from the N-terminus, the 575-residue chain is Phosphoenolpyruvate-protein phosphotransferase (575 aa).

Catalysis depends on histidine 191, which acts as the Tele-phosphohistidine intermediate. Residues arginine 298 and arginine 334 each contribute to the phosphoenolpyruvate site. The Mg(2+) site is built by glutamate 435 and aspartate 459. Residues 458 to 459 and arginine 469 each bind phosphoenolpyruvate; that span reads ND. Cysteine 506 (proton donor) is an active-site residue.

It belongs to the PEP-utilizing enzyme family. Homodimer. It depends on Mg(2+) as a cofactor.

It localises to the cytoplasm. The enzyme catalyses L-histidyl-[protein] + phosphoenolpyruvate = N(pros)-phospho-L-histidyl-[protein] + pyruvate. Functionally, general (non sugar-specific) component of the phosphoenolpyruvate-dependent sugar phosphotransferase system (sugar PTS). This major carbohydrate active-transport system catalyzes the phosphorylation of incoming sugar substrates concomitantly with their translocation across the cell membrane. Enzyme I transfers the phosphoryl group from phosphoenolpyruvate (PEP) to the phosphoryl carrier protein (HPr). The chain is Phosphoenolpyruvate-protein phosphotransferase (ptsI) from Lactococcus lactis subsp. cremoris (Streptococcus cremoris).